A 664-amino-acid chain; its full sequence is UvrABC system protein B (664 aa).

The 158-residue stretch at 23–180 folds into the Helicase ATP-binding domain; that stretch reads EGLNRGMRFQ…EKLAKIGYQR (158 aa). 36–43 serves as a coordination point for ATP; it reads GVTGSGKT. The short motif at 89 to 112 is the Beta-hairpin element; it reads YYDYYQPEAYIPTKDLYIEKNADI. Residues 426–588 enclose the Helicase C-terminal domain; sequence QVDDLINEIV…ITPRSIVKPL (163 aa). Positions 622–657 constitute a UVR domain; it reads EEYVALLEEEMYRAASELRYEDAAALRDELFRVKET.

It belongs to the UvrB family. In terms of assembly, forms a heterotetramer with UvrA during the search for lesions. Interacts with UvrC in an incision complex.

It localises to the cytoplasm. Functionally, the UvrABC repair system catalyzes the recognition and processing of DNA lesions. A damage recognition complex composed of 2 UvrA and 2 UvrB subunits scans DNA for abnormalities. Upon binding of the UvrA(2)B(2) complex to a putative damaged site, the DNA wraps around one UvrB monomer. DNA wrap is dependent on ATP binding by UvrB and probably causes local melting of the DNA helix, facilitating insertion of UvrB beta-hairpin between the DNA strands. Then UvrB probes one DNA strand for the presence of a lesion. If a lesion is found the UvrA subunits dissociate and the UvrB-DNA preincision complex is formed. This complex is subsequently bound by UvrC and the second UvrB is released. If no lesion is found, the DNA wraps around the other UvrB subunit that will check the other stand for damage. The polypeptide is UvrABC system protein B (Thermotoga neapolitana (strain ATCC 49049 / DSM 4359 / NBRC 107923 / NS-E)).